We begin with the raw amino-acid sequence, 320 residues long: MLYSCLASKTTFHFAAGLCSGLTSSILLQPADLLKTRVQQSQKTASLLPTIKTILSSPHPIRGLWRGTLPSALRTGFGSALYFTSLNALRQGLAQTEAAMAIAASSSDGKSRTSSSALPKLSNWGNLATGAVARTAAGFVMMPVTVLKVRYESDYYAYRSLYSAGRDIVRTEGVRGLFSGFGATAARDAPYAGLYVLFYEQLKRRLALVASSEQSEQPLKSTSSSSINFVSGGLAAGLATAITNPFDAVKTRLQLMPGKYGNMIRAVRLMIREDGVRSLFGGLGLRITRKALSSALAWTVYEELILRAEARWAEKDKIDL.

Solcar repeat units follow at residues 8 to 92 (SKTT…LRQG), 121 to 205 (LSNW…LKRR), and 223 to 307 (SSSS…LILR). 6 helical membrane passes run 14–39 (FAAGLCSGLTSSILLQPADLLKTRVQ), 67–93 (GTLPSALRTGFGSALYFTSLNALRQGL), 127–152 (LATGAVARTAAGFVMMPVTVLKVRYE), 180–203 (GFGATAARDAPYAGLYVLFYEQLK), 227–253 (INFVSGGLAAGLATAITNPFDAVKTRL), and 282–300 (GLGLRITRKALSSALAWTV).

It belongs to the mitochondrial carrier (TC 2.A.29) family. SLC25A38 subfamily.

The protein resides in the mitochondrion inner membrane. The enzyme catalyses glycine(in) = glycine(out). Mitochondrial glycine transporter that imports glycine into the mitochondrial matrix. Plays an important role in providing glycine for the first enzymatic step in heme biosynthesis, the condensation of glycine with succinyl-CoA to produce 5-aminolevulinate (ALA) in the mitochondrial matrix. This is Mitochondrial glycine transporter from Aspergillus fumigatus (strain CBS 144.89 / FGSC A1163 / CEA10) (Neosartorya fumigata).